A 137-amino-acid chain; its full sequence is Sch210972 biosynthesis cluster protein E (137 aa).

A compositionally biased stretch (polar residues) spans 1 to 12 (MTKYTSVNSSLP). The disordered stretch occupies residues 1–137 (MTKYTSVNSS…ASTIRPPCCG (137 aa)). Over residues 15–27 (PRQTTPTRPATQT) the composition is skewed to low complexity. Over residues 51–71 (GSLNGSPTLRTTLDTSLSGTR) the composition is skewed to polar residues. Positions 94–109 (DEDHPHDPGPDSDAKK) are enriched in basic and acidic residues.

The protein operates within secondary metabolite biosynthesis. Its function is as follows. Part of the gene cluster that mediates the biosynthesis of the tetramic acid Sch210972, a potential anti-HIV fungal natural product that contains a decalin core. The PKS module of cghG together with the enoylreductase cghC catalyze the formation of the polyketide unit which is then conjugated to 4-hydroxyl-4-methyl glutamate (HMG) by the condensation domain of the cghG NRPS module. One unique structural feature of Sch210972 is the tetramic acid motif proposed to be derived from the non-proteinogenic amino acid HMG, by a Dieckmann-type condensation catalyzed by the reductase domain of cghG. The aldolase cghB catalyzes the aldol condensation of 2 molecules of pyruvic acid to yield the intermediate 4-hydroxyl-4-methyl-2-oxoglutarate (HMOG), which can then be stereoselectively transaminated by an unidentified enzyme to form HMG. The Diels-Alderase cghA then uses the Dieckmann product released by cghG as substrate and catalyzes the Diels-Alder cycloaddition to form the decalin ring of Sch210972. CghA also suppresses the nonenzymatic formation of the alternative stereoisomer. The sequence is that of Sch210972 biosynthesis cluster protein E from Chaetomium globosum (strain ATCC 6205 / CBS 148.51 / DSM 1962 / NBRC 6347 / NRRL 1970) (Soil fungus).